A 106-amino-acid chain; its full sequence is ATP-dependent Clp protease adapter protein ClpS (106 aa).

Residues 1–13 (MGNNSTWSQSENL) are compositionally biased toward polar residues. The tract at residues 1–21 (MGNNSTWSQSENLTADKQKEK) is disordered.

Belongs to the ClpS family. In terms of assembly, binds to the N-terminal domain of the chaperone ClpA.

Involved in the modulation of the specificity of the ClpAP-mediated ATP-dependent protein degradation. This chain is ATP-dependent Clp protease adapter protein ClpS, found in Pectobacterium carotovorum subsp. carotovorum (strain PC1).